Consider the following 210-residue polypeptide: Urease accessory protein UreF (210 aa).

It belongs to the UreF family. UreD, UreF and UreG form a complex that acts as a GTP-hydrolysis-dependent molecular chaperone, activating the urease apoprotein by helping to assemble the nickel containing metallocenter of UreC. The UreE protein probably delivers the nickel.

It localises to the cytoplasm. Functionally, required for maturation of urease via the functional incorporation of the urease nickel metallocenter. This Cereibacter sphaeroides (strain KD131 / KCTC 12085) (Rhodobacter sphaeroides) protein is Urease accessory protein UreF.